The chain runs to 276 residues: MSKKSEKRATAVAAVVVCLVVLLTAVGPAMVTARPANEIPVESVLAEDQPQQPTSEAWNSVPAVEVPMASAPSGLPNASDTSIETLRVQSARTEERLYVRLSWADGTADRNISGPQQFVDAAAVQVPVNTTARPPISMGSTRNPVNVWYWRADGETEELLAGGPGTTTKFEQSAVETKTAYDDGRWTIVMSRELNSDAENRTSFAANDDVDVAFAVWNGSQMERSGRKSVSEWYHFPFGPGPQGPPYESILWTVAGLAIVGVALVTIQAVQKNGGD.

Methionine 138 and lysine 228 together coordinate heme b.

As to quaternary structure, probable multiprotein complex; a catalytic heterodimer of an alpha and beta chain is proposed to associate with additional subunits involved in membrane attachment and electron transfer. Heme b serves as cofactor.

It is found in the cell membrane. Functionally, the respiratory membrane-bound nitrate reductase enzyme complex plays a role in generation of metabolic energy by using nitrate as a terminal electron acceptor during anaerobic conditions. May transfer electrons to the iron-sulfur centers of the catalytic beta subunit. In Haloferax mediterranei (strain ATCC 33500 / DSM 1411 / JCM 8866 / NBRC 14739 / NCIMB 2177 / R-4) (Halobacterium mediterranei), this protein is Putative respiratory nitrate reductase heme subunit ORF7.